Consider the following 151-residue polypeptide: D-aminoacyl-tRNA deacylase (151 aa).

The short motif at 136 to 137 (GP) is the Gly-cisPro motif, important for rejection of L-amino acids element.

It belongs to the DTD family. Homodimer.

Its subcellular location is the cytoplasm. The catalysed reaction is glycyl-tRNA(Ala) + H2O = tRNA(Ala) + glycine + H(+). It catalyses the reaction a D-aminoacyl-tRNA + H2O = a tRNA + a D-alpha-amino acid + H(+). An aminoacyl-tRNA editing enzyme that deacylates mischarged D-aminoacyl-tRNAs. Also deacylates mischarged glycyl-tRNA(Ala), protecting cells against glycine mischarging by AlaRS. Acts via tRNA-based rather than protein-based catalysis; rejects L-amino acids rather than detecting D-amino acids in the active site. By recycling D-aminoacyl-tRNA to D-amino acids and free tRNA molecules, this enzyme counteracts the toxicity associated with the formation of D-aminoacyl-tRNA entities in vivo and helps enforce protein L-homochirality. The sequence is that of D-aminoacyl-tRNA deacylase from Lactococcus lactis subsp. lactis (strain IL1403) (Streptococcus lactis).